Here is a 456-residue protein sequence, read N- to C-terminus: RNA polymerase II-associated protein 1 homolog (456 aa).

The tract at residues 382 to 456 is disordered; the sequence is LRSVEGSLNE…PVEQLQNEED (75 aa). The residue at position 388 (S388) is a Phosphoserine. Over residues 396 to 406 the composition is skewed to basic and acidic residues; it reads EEKPAESREQL. Polar residues-rich tracts occupy residues 408 to 433 and 441 to 456; these read SAEQ…QANS and GNTQ…NEED.

The protein belongs to the PAF1 family.

It is found in the cytoplasm. The protein resides in the nucleus. The polypeptide is RNA polymerase II-associated protein 1 homolog (Schizosaccharomyces pombe (strain 972 / ATCC 24843) (Fission yeast)).